The sequence spans 353 residues: (3aS,4S,5R,7aS)-5-hydroxy-7a-methyl-1-oxo-octahydro-1H-indene-4-carboxyl-CoA dehydrogenase (353 aa).

Residues 22 to 24 (GMG), 171 to 173 (AGG), and 194 to 195 (GT) each bind FMN.

It belongs to the nitronate monooxygenase family.

The catalysed reaction is (3aS,4S,5R,7aS)-5-hydroxy-7a-methyl-1-oxo-octahydro-1H-indene-4-carboxyl-CoA + NAD(+) = (5R,7aS)-5-hydroxy-7a-methyl-1-oxo-2,3,5,6,7,7a-hexahydro-1H-indene-carboxyl-CoA + NADH + H(+). It functions in the pathway steroid metabolism; cholesterol degradation. In terms of biological role, involved in the final steps of cholesterol and steroid degradation. Probably catalyzes the introduction of a double bound into the C ring of 5OH-HIC-CoA, leading to the formation of (5R,7aS)-5-hydroxy-7a-methyl-1-oxo-3,5,6,7-tetrahydro-2H-indene-4-carboxyl-CoA. The polypeptide is (3aS,4S,5R,7aS)-5-hydroxy-7a-methyl-1-oxo-octahydro-1H-indene-4-carboxyl-CoA dehydrogenase (Rhodococcus jostii (strain RHA1)).